The primary structure comprises 266 residues: Thymidylate synthase (266 aa).

Arg-24 serves as a coordination point for dUMP. (6R)-5,10-methylene-5,6,7,8-tetrahydrofolate is bound at residue His-54. DUMP is bound at residue 129 to 130 (RR). Residue Cys-149 is the Nucleophile of the active site. DUMP-binding positions include 169–172 (RSAD), Asn-180, and 210–212 (HIY). Residue Asp-172 participates in (6R)-5,10-methylene-5,6,7,8-tetrahydrofolate binding. Ala-265 provides a ligand contact to (6R)-5,10-methylene-5,6,7,8-tetrahydrofolate.

The protein belongs to the thymidylate synthase family. Bacterial-type ThyA subfamily. As to quaternary structure, homodimer.

It is found in the cytoplasm. It carries out the reaction dUMP + (6R)-5,10-methylene-5,6,7,8-tetrahydrofolate = 7,8-dihydrofolate + dTMP. It functions in the pathway pyrimidine metabolism; dTTP biosynthesis. Functionally, catalyzes the reductive methylation of 2'-deoxyuridine-5'-monophosphate (dUMP) to 2'-deoxythymidine-5'-monophosphate (dTMP) while utilizing 5,10-methylenetetrahydrofolate (mTHF) as the methyl donor and reductant in the reaction, yielding dihydrofolate (DHF) as a by-product. This enzymatic reaction provides an intracellular de novo source of dTMP, an essential precursor for DNA biosynthesis. This chain is Thymidylate synthase, found in Mycobacterium avium (strain 104).